We begin with the raw amino-acid sequence, 483 residues long: Regulatory protein ViaA (483 aa).

This sequence belongs to the ViaA family. As to quaternary structure, homodimer. Interacts with RavA.

It localises to the cytoplasm. In terms of biological role, component of the RavA-ViaA chaperone complex, which may act on the membrane to optimize the function of some of the respiratory chains. ViaA stimulates the ATPase activity of RavA. This is Regulatory protein ViaA from Shigella sonnei (strain Ss046).